Here is a 346-residue protein sequence, read N- to C-terminus: DNA ligase (346 aa).

ATP contacts are provided by residues 32 to 35 (DCKY), arginine 39, 55 to 57 (RVS), glutamate 93, glutamate 142, and arginine 149. Residue lysine 34 is the N6-AMP-lysine intermediate of the active site. Residue glutamate 223 coordinates a divalent metal cation. Residues lysine 238 and lysine 244 each contribute to the ATP site.

The protein belongs to the ATP-dependent DNA ligase family. A divalent metal cation serves as cofactor.

It carries out the reaction ATP + (deoxyribonucleotide)n-3'-hydroxyl + 5'-phospho-(deoxyribonucleotide)m = (deoxyribonucleotide)n+m + AMP + diphosphate.. In terms of biological role, DNA ligase, which is expressed in the early stage of lytic development, has been implicated in T7 DNA synthesis and genetic recombination. It may also play a role in T7 DNA repair. This is DNA ligase (1.3) from Enterobacteria phage T3 (Bacteriophage T3).